We begin with the raw amino-acid sequence, 555 residues long: DNA ligase (555 aa).

Glutamate 247 serves as a coordination point for ATP. Lysine 249 (N6-AMP-lysine intermediate) is an active-site residue. ATP contacts are provided by arginine 254, arginine 269, glutamate 298, phenylalanine 337, arginine 411, and lysine 417.

This sequence belongs to the ATP-dependent DNA ligase family. Mg(2+) serves as cofactor.

It catalyses the reaction ATP + (deoxyribonucleotide)n-3'-hydroxyl + 5'-phospho-(deoxyribonucleotide)m = (deoxyribonucleotide)n+m + AMP + diphosphate.. In terms of biological role, DNA ligase that seals nicks in double-stranded DNA during DNA replication, DNA recombination and DNA repair. The protein is DNA ligase of Archaeoglobus fulgidus (strain ATCC 49558 / DSM 4304 / JCM 9628 / NBRC 100126 / VC-16).